The primary structure comprises 239 residues: Uridylate kinase (239 aa).

ATP is bound at residue 13-16 (KLSG). Residue G55 participates in UMP binding. G56 and R60 together coordinate ATP. UMP-binding positions include D75 and 136-143 (TGNPFFTT). Residues T163, N164, Y169, and D172 each contribute to the ATP site.

This sequence belongs to the UMP kinase family. In terms of assembly, homohexamer.

It is found in the cytoplasm. It carries out the reaction UMP + ATP = UDP + ADP. It functions in the pathway pyrimidine metabolism; CTP biosynthesis via de novo pathway; UDP from UMP (UMPK route): step 1/1. Inhibited by UTP. Its function is as follows. Catalyzes the reversible phosphorylation of UMP to UDP. This Neisseria meningitidis serogroup C / serotype 2a (strain ATCC 700532 / DSM 15464 / FAM18) protein is Uridylate kinase.